Here is a 236-residue protein sequence, read N- to C-terminus: Rab-like protein 3 (236 aa).

The interval 1 to 236 (MASLDRVKVL…GGTLKSLHYD (236 aa)) is small GTPase-like. Residues 16–21 (GVGKSS), 148–150 (KLD), and 179–180 (DC) each bind GTP.

It belongs to the small GTPase superfamily. Rab family. In terms of assembly, homodimer. Interacts with GPR89; the interaction stabilizes GPR89. Interacts with RAP1GDS1.

Its function is as follows. Required for KRAS signaling regulation and modulation of cell proliferation. Regulator of KRAS prenylation, and probably prenylation of other small GTPases. Required for lymphocyte development and function. Not required for myeloid cell development. In Bos taurus (Bovine), this protein is Rab-like protein 3 (RABL3).